Reading from the N-terminus, the 211-residue chain is Uracil phosphoribosyltransferase (211 aa).

Residues Arg-81, Arg-106, and 133 to 141 each bind 5-phospho-alpha-D-ribose 1-diphosphate; that span reads DPMLATGNS. Residues Ile-196 and 201–203 contribute to the uracil site; that span reads GDA. Asp-202 is a binding site for 5-phospho-alpha-D-ribose 1-diphosphate.

The protein belongs to the UPRTase family. The cofactor is Mg(2+).

It catalyses the reaction UMP + diphosphate = 5-phospho-alpha-D-ribose 1-diphosphate + uracil. Its pathway is pyrimidine metabolism; UMP biosynthesis via salvage pathway; UMP from uracil: step 1/1. Allosterically activated by GTP. Its function is as follows. Catalyzes the conversion of uracil and 5-phospho-alpha-D-ribose 1-diphosphate (PRPP) to UMP and diphosphate. The protein is Uracil phosphoribosyltransferase of Myxococcus xanthus (strain DK1622).